The chain runs to 189 residues: Crossover junction endodeoxyribonuclease RuvC (189 aa).

Residues D7, E68, and D141 contribute to the active site. 3 residues coordinate Mg(2+): D7, E68, and D141.

This sequence belongs to the RuvC family. Homodimer which binds Holliday junction (HJ) DNA. The HJ becomes 2-fold symmetrical on binding to RuvC with unstacked arms; it has a different conformation from HJ DNA in complex with RuvA. In the full resolvosome a probable DNA-RuvA(4)-RuvB(12)-RuvC(2) complex forms which resolves the HJ. Mg(2+) is required as a cofactor.

It is found in the cytoplasm. It carries out the reaction Endonucleolytic cleavage at a junction such as a reciprocal single-stranded crossover between two homologous DNA duplexes (Holliday junction).. In terms of biological role, the RuvA-RuvB-RuvC complex processes Holliday junction (HJ) DNA during genetic recombination and DNA repair. Endonuclease that resolves HJ intermediates. Cleaves cruciform DNA by making single-stranded nicks across the HJ at symmetrical positions within the homologous arms, yielding a 5'-phosphate and a 3'-hydroxyl group; requires a central core of homology in the junction. The consensus cleavage sequence is 5'-(A/T)TT(C/G)-3'. Cleavage occurs on the 3'-side of the TT dinucleotide at the point of strand exchange. HJ branch migration catalyzed by RuvA-RuvB allows RuvC to scan DNA until it finds its consensus sequence, where it cleaves and resolves the cruciform DNA. This is Crossover junction endodeoxyribonuclease RuvC from Rhodococcus opacus (strain B4).